Here is a 237-residue protein sequence, read N- to C-terminus: MTPQDFYRTLEEDGFSLASKQKEQFDTYFKLLVEWNTKINLTAITEKNEVYLKHFYDSIAPILQGFLANEPIKLLDIGAGAGFPSLPMKILFPNLEVTIIDSLNKRISFLTLLAQELGLENVHFFHGRAEDFGQDKAFRGQFDVVTARAVARMQVLSELTIPFLKIGGKLIALKAQAADQELEEAKNALCLLFGKVIKNHSYQLPNGDSRFITIVEKKKETPNKYPRKAGLPNKKPL.

S-adenosyl-L-methionine is bound by residues Gly78, Phe83, 129 to 130, and Arg148; that span reads AE.

The protein belongs to the methyltransferase superfamily. RNA methyltransferase RsmG family.

The protein localises to the cytoplasm. Its function is as follows. Specifically methylates the N7 position of a guanine in 16S rRNA. This chain is Ribosomal RNA small subunit methyltransferase G, found in Streptococcus pyogenes serotype M4 (strain MGAS10750).